Consider the following 25-residue polypeptide: GLLSVLGSVAKHVLPHVVPVIAEKL.

Residue leucine 25 is modified to Leucine amide.

It belongs to the frog skin active peptide (FSAP) family. Caerin subfamily. Expressed by the skin dorsal glands.

Its subcellular location is the secreted. Functionally, antibacterial peptide with wide spectrum of activity. The polypeptide is Caerin-1.10 (Litoria rothii (Roth's tree frog)).